Consider the following 290-residue polypeptide: ATP synthase gamma chain (290 aa).

It belongs to the ATPase gamma chain family. F-type ATPases have 2 components, CF(1) - the catalytic core - and CF(0) - the membrane proton channel. CF(1) has five subunits: alpha(3), beta(3), gamma(1), delta(1), epsilon(1). CF(0) has three main subunits: a, b and c.

Its subcellular location is the cell membrane. Its function is as follows. Produces ATP from ADP in the presence of a proton gradient across the membrane. The gamma chain is believed to be important in regulating ATPase activity and the flow of protons through the CF(0) complex. The protein is ATP synthase gamma chain of Wolbachia sp. subsp. Brugia malayi (strain TRS).